The sequence spans 434 residues: Asparagine--tRNA ligase (434 aa).

This sequence belongs to the class-II aminoacyl-tRNA synthetase family. In terms of assembly, homodimer.

Its subcellular location is the cytoplasm. The catalysed reaction is tRNA(Asn) + L-asparagine + ATP = L-asparaginyl-tRNA(Asn) + AMP + diphosphate + H(+). In Oenococcus oeni (strain ATCC BAA-331 / PSU-1), this protein is Asparagine--tRNA ligase.